Reading from the N-terminus, the 241-residue chain is Glucosamine-6-phosphate deaminase (241 aa).

The active-site Proton acceptor; for enolization step is aspartate 67. The active-site For ring-opening step is asparagine 136. The active-site Proton acceptor; for ring-opening step is histidine 138. Glutamate 143 serves as the catalytic For ring-opening step.

This sequence belongs to the glucosamine/galactosamine-6-phosphate isomerase family. NagB subfamily.

It catalyses the reaction alpha-D-glucosamine 6-phosphate + H2O = beta-D-fructose 6-phosphate + NH4(+). The protein operates within amino-sugar metabolism; N-acetylneuraminate degradation; D-fructose 6-phosphate from N-acetylneuraminate: step 5/5. In terms of biological role, catalyzes the reversible isomerization-deamination of glucosamine 6-phosphate (GlcN6P) to form fructose 6-phosphate (Fru6P) and ammonium ion. The chain is Glucosamine-6-phosphate deaminase from Bacillus pumilus (strain SAFR-032).